A 707-amino-acid chain; its full sequence is Leucine-rich repeat neuronal protein 3 (707 aa).

An N-terminal signal peptide occupies residues 1 to 22 (MKDTPLQVHVLLGLAITTLVQA). Residues 23-69 (IDKKVDCPQLCTCEIRPWFTPRSIYMEASTVDCNDLGLLNFPARLPA) form the LRRNT domain. Residues 23–626 (IDKKVDCPQL…DGKEYGKNHT (604 aa)) lie on the Extracellular side of the membrane. 12 LRR repeats span residues 70–91 (DTQILLLQTNNIARIEHSTDFP), 93–114 (NLTGLDLSQNNLSSVTNINVQK), 117–138 (QLLSVYLEENKLTELPEKCLYG), 141–162 (NLQELYVNHNLLSTISPGAFIG), 165–186 (NLLRLHLNSNRLQMINSQWFDA), 189–210 (NLEILMLGDNPIIRIKDMNFQP), 213–234 (KLRSLVIAGINLTEIPDDALAG), 237–258 (NLESISFYDNRLSKVPQVALQK), 261–282 (NLKFLDLNKNPINRIRRGDFSN), 285–304 (HLKELGINNMPELVSIDSLA), 310–332 (DLRKIEATNNPRLSYIHPNAFFR), and 335–358 (KLESLMLNTNALSALYHGTIESLP). N93 and N103 each carry an N-linked (GlcNAc...) asparagine glycan. An N-linked (GlcNAc...) asparagine glycan is attached at N223. Residues 368 to 421 (NPIRCDCVIRWINMNKTNIRFMEPDSLFCVDPPEFQGQNVRQVHFRDMMEICLP) enclose the LRRCT domain. N-linked (GlcNAc...) asparagine glycosylation is present at N382. An Ig-like C2-type domain is found at 421 to 514 (PLIAPESFPS…DLKSIMIKVG (94 aa)). Residues C444 and C496 are joined by a disulfide bond. N-linked (GlcNAc...) asparagine glycans are attached at residues N522, N579, N608, and N624. Residues 523–614 (GSLNIKIRDI…QCVNVTTKSL (92 aa)) enclose the Fibronectin type-III domain. The chain crosses the membrane as a helical span at residues 627-647 (VFVACVGGLLGIIGVMCLFSC). Over 648-707 (VSQEGSSEGEHSYAVNHCHKPALAFSELYPPLINLWESSKEKRATLEVKATAIGVPTNMS) the chain is Cytoplasmic.

Expressed in the brain, in Stronger expression in the ventricular zone and anlage of thalamus, spinal cord, and dorsal root ganglion in 11-17 dpc cerebellum and cerebral cortex in adults.

The protein resides in the membrane. In Mus musculus (Mouse), this protein is Leucine-rich repeat neuronal protein 3 (Lrrn3).